Consider the following 164-residue polypeptide: Urocortin-3 (164 aa).

Positions 1 to 23 (MLMPTYFLLPLLLLLGGPRTSLS) are cleaved as a signal peptide. Positions 24-121 (HKFYNTGPVF…PDKPKSDRGT (98 aa)) are excised as a propeptide. Residues 58–120 (SFGHLPTQDP…YPDKPKSDRG (63 aa)) form a disordered region. A compositionally biased stretch (basic and acidic residues) spans 110 to 120 (LYPDKPKSDRG). Isoleucine amide is present on I160.

The protein belongs to the sauvagine/corticotropin-releasing factor/urotensin I family. In terms of assembly, binds with high affinity to CRF receptors 2-alpha and 2-beta. In terms of tissue distribution, expressed in some areas of the brain including the hypothalamus, amygdala, and brainstem, but is not evident in the cerebellum, pituitary, or cerebral cortex; it is also expressed peripherally in small intestine and skin.

It localises to the secreted. Suppresses food intake, delays gastric emptying and decreases heat-induced edema. Might represent an endogenous ligand for maintaining homeostasis after stress. This is Urocortin-3 (Ucn3) from Mus musculus (Mouse).